The following is a 253-amino-acid chain: Ubiquinone/menaquinone biosynthesis C-methyltransferase UbiE (253 aa).

Residues T76, D97, N125 to A126, and S142 each bind S-adenosyl-L-methionine.

The protein belongs to the class I-like SAM-binding methyltransferase superfamily. MenG/UbiE family.

The catalysed reaction is a 2-demethylmenaquinol + S-adenosyl-L-methionine = a menaquinol + S-adenosyl-L-homocysteine + H(+). The enzyme catalyses a 2-methoxy-6-(all-trans-polyprenyl)benzene-1,4-diol + S-adenosyl-L-methionine = a 5-methoxy-2-methyl-3-(all-trans-polyprenyl)benzene-1,4-diol + S-adenosyl-L-homocysteine + H(+). Its pathway is quinol/quinone metabolism; menaquinone biosynthesis; menaquinol from 1,4-dihydroxy-2-naphthoate: step 2/2. It functions in the pathway cofactor biosynthesis; ubiquinone biosynthesis. In terms of biological role, methyltransferase required for the conversion of demethylmenaquinol (DMKH2) to menaquinol (MKH2) and the conversion of 2-polyprenyl-6-methoxy-1,4-benzoquinol (DDMQH2) to 2-polyprenyl-3-methyl-6-methoxy-1,4-benzoquinol (DMQH2). This Xylella fastidiosa (strain M12) protein is Ubiquinone/menaquinone biosynthesis C-methyltransferase UbiE.